A 371-amino-acid polypeptide reads, in one-letter code: Otolith matrix protein 1 (371 aa).

The N-terminal stretch at M1–S21 is a signal peptide. The 341-residue stretch at I27–C367 folds into the Transferrin-like domain.

In terms of assembly, interacts with OTOL1.

It is found in the secreted. In terms of biological role, required for normal otolith growth and deposition of otolin-1 in the otolith. The protein is Otolith matrix protein 1 (otomp) of Danio rerio (Zebrafish).